Reading from the N-terminus, the 144-residue chain is Maximins 10/H3 (144 aa).

Residues 1-18 form the signal peptide; it reads MNFKYIVAVSFLIASAYA. Residues 19–43 constitute a propeptide that is removed on maturation; the sequence is RSVKNDEQSLSQRDVLDEESLREFR. S70 carries the post-translational modification Serine amide. Positions 74–123 are excised as a propeptide; the sequence is TAEDHEVMKRLEAVMRDLDSLDYPEEATERETRGFNQEEIANLFTKKEKR. I143 is subject to Isoleucine amide.

This sequence belongs to the bombinin family. In terms of tissue distribution, expressed by the skin glands.

Its subcellular location is the secreted. Its function is as follows. Maximin-10 shows antimicrobial activity against bacteria and against the fungus C.albicans. It has little hemolytic activity. Maximin-H3 shows antibacterial activity against both Gram-positive and Gram-negative bacteria. It also shows antimicrobial activity against the fungus C.albicans. Shows strong hemolytic activity. The protein is Maximins 10/H3 of Bombina maxima (Giant fire-bellied toad).